A 274-amino-acid chain; its full sequence is Large ribosomal subunit protein uL2cz/uL2cy (274 aa).

A disordered region spans residues 225-274 (PVDHPHGGGEGRAPIGRKKPVTPWGYPALGRRSRKRKKYSDNLILRRRTK).

Belongs to the universal ribosomal protein uL2 family. As to quaternary structure, part of the 50S ribosomal subunit.

Its subcellular location is the plastid. The protein resides in the chloroplast. The sequence is that of Large ribosomal subunit protein uL2cz/uL2cy (rpl2-A) from Lotus japonicus (Lotus corniculatus var. japonicus).